Reading from the N-terminus, the 533-residue chain is Suppressor of cytokine signaling 6 (533 aa).

Disordered regions lie at residues 54–136 (CDIG…WPLR) and 177–199 (ELRDLQPEPRPESRCSPSSPGDL). Positions 59 to 69 (EDEKGKNRSKS) are enriched in basic and acidic residues. Residues 76 to 88 (LKRRLSAKQKTKG) are compositionally biased toward basic residues. The span at 177-189 (ELRDLQPEPRPES) shows a compositional bias: basic and acidic residues. The 108-residue stretch at 382–489 (WYWGPITRWE…TYPVRLTNPV (108 aa)) folds into the SH2 domain. An SOCS box domain is found at 484–533 (RLTNPVSRFMQVRSLQYLCRFVIRQYTRIDLIQKLPLPNKMKDYLQEKHY).

As to quaternary structure, interacts with KIT (phosphorylated). Interacts with RBCK1. Interacts with phosphorylated IRS4. Interacts with PIM3.

The protein operates within protein modification; protein ubiquitination. Its function is as follows. SOCS family proteins form part of a classical negative feedback system that regulates cytokine signal transduction. May be a substrate recognition component of a SCF-like ECS (Elongin BC-CUL2/5-SOCS-box protein) E3 ubiquitin-protein ligase complex which mediates the ubiquitination and subsequent proteasomal degradation of target proteins. Regulates KIT degradation by ubiquitination of the tyrosine-phosphorylated receptor. The protein is Suppressor of cytokine signaling 6 (Socs6) of Mus musculus (Mouse).